The following is a 152-amino-acid chain: Protein SprT-like (152 aa).

Residues 7–147 (QRLVEEVSLQ…CGKCKGKLKP (141 aa)) form the SprT-like domain. His67 provides a ligand contact to Zn(2+). The active site involves Glu68. His71 contributes to the Zn(2+) binding site.

It belongs to the SprT family. Requires Zn(2+) as cofactor.

The protein resides in the cytoplasm. The protein is Protein SprT-like of Bacillus cereus (strain G9842).